The following is a 191-amino-acid chain: uncharacterized protein (191 aa).

The N-terminal stretch at 1 to 23 (MKKTMSAITAAAAVTSCFTGFGA) is a signal peptide.

This is an uncharacterized protein from Bacillus subtilis (strain 168).